Here is a 510-residue protein sequence, read N- to C-terminus: GMP synthase [glutamine-hydrolyzing] (510 aa).

One can recognise a Glutamine amidotransferase type-1 domain in the interval 5-195 (LVIVLDFGGQ…LFNIADLSAD (191 aa)). The active-site Nucleophile is C82. Catalysis depends on residues H169 and E171. The GMPS ATP-PPase domain occupies 196–385 (WTMGSYIEET…LGLHREIVER (190 aa)). ATP is bound at residue 223–229 (SGGIDST).

Homodimer.

It catalyses the reaction XMP + L-glutamine + ATP + H2O = GMP + L-glutamate + AMP + diphosphate + 2 H(+). It functions in the pathway purine metabolism; GMP biosynthesis; GMP from XMP (L-Gln route): step 1/1. Functionally, catalyzes the synthesis of GMP from XMP. The polypeptide is GMP synthase [glutamine-hydrolyzing] (Natranaerobius thermophilus (strain ATCC BAA-1301 / DSM 18059 / JW/NM-WN-LF)).